A 207-amino-acid polypeptide reads, in one-letter code: Protein LURP1 (207 aa).

This sequence belongs to the LOR family. As to expression, limited to discrete pathogen infection sites in leaves.

Functionally, involved in basal defense against virulent oomycetes. Might be related to the phospholipid scramblase and tubby-like superfamily of membrane tethered transcription factors. The sequence is that of Protein LURP1 (LURP1) from Arabidopsis thaliana (Mouse-ear cress).